Reading from the N-terminus, the 234-residue chain is ATP synthase subunit a 2 (234 aa).

A run of 6 helical transmembrane segments spans residues 29 to 49 (FFQHVTHTWLVMAILIGVGLL), 90 to 110 (LIATLALFLLVSNLIGLIPGF), 116 to 136 (SLNTNAALAVGVFLVTHIVGV), 147 to 167 (FMGPVWWLTPLILPIELIGHL), 186 to 206 (IVLMIFFSLVPLLLPIPMMLM), and 207 to 227 (GILVAFIQTFVFMLLSMIYIA).

Belongs to the ATPase A chain family. In terms of assembly, F-type ATPases have 2 components, CF(1) - the catalytic core - and CF(0) - the membrane proton channel. CF(1) has five subunits: alpha(3), beta(3), gamma(1), delta(1), epsilon(1). CF(0) has three main subunits: a(1), b(2) and c(9-12). The alpha and beta chains form an alternating ring which encloses part of the gamma chain. CF(1) is attached to CF(0) by a central stalk formed by the gamma and epsilon chains, while a peripheral stalk is formed by the delta and b chains.

The protein localises to the cell inner membrane. Functionally, key component of the proton channel; it plays a direct role in the translocation of protons across the membrane. This is ATP synthase subunit a 2 from Syntrophotalea carbinolica (strain DSM 2380 / NBRC 103641 / GraBd1) (Pelobacter carbinolicus).